A 195-amino-acid polypeptide reads, in one-letter code: MRLRFSVPLFFFGCVFVHGVFAGPFPPPGMSLPEYWGEEHVWWDGRAAFHGEVVRPACTLAMEDAWQIIDMGETPVRDLQNGFSGPERKFSLRLRNCEFNSQGGNLFSDSRIRVTFDGVRGETPDKFNLSGQAKGINLQIADVRGNIARAGKVMPAIPLTGNEEALDYTLRIVRNGKKLEAGNYFAVLGFRVDYE.

The signal sequence occupies residues 1 to 22 (MRLRFSVPLFFFGCVFVHGVFA). Cysteines 58 and 97 form a disulfide.

Belongs to the fimbrial protein family.

The protein resides in the secreted. It localises to the fimbrium. In terms of biological role, fimbriae (also called pili), polar filaments radiating from the surface of the bacterium to a length of 0.5-1.5 micrometers and numbering 100-300 per cell, enable bacteria to colonize the epithelium of specific host organs. PapH seems to anchor the pilus to the bacterial cell. In addition the stoichiometric relationship between PapH and PapA determines the pilus length. The sequence is that of PAP fimbrial minor pilin protein (papH) from Escherichia coli.